The primary structure comprises 968 residues: RNA polymerase-associated protein RapA (968 aa).

The 170-residue stretch at 163–332 (EVGRRFAPRV…FARLRLLDPD (170 aa)) folds into the Helicase ATP-binding domain. 176 to 183 (DEVGLGKT) serves as a coordination point for ATP. Residues 278–281 (DEAH) carry the DEAH box motif. Positions 491–641 (RVDWLINFLK…AFEQTCPSGH (151 aa)) constitute a Helicase C-terminal domain.

The protein belongs to the SNF2/RAD54 helicase family. RapA subfamily. As to quaternary structure, interacts with the RNAP. Has a higher affinity for the core RNAP than for the holoenzyme. Its ATPase activity is stimulated by binding to RNAP.

Its function is as follows. Transcription regulator that activates transcription by stimulating RNA polymerase (RNAP) recycling in case of stress conditions such as supercoiled DNA or high salt concentrations. Probably acts by releasing the RNAP, when it is trapped or immobilized on tightly supercoiled DNA. Does not activate transcription on linear DNA. Probably not involved in DNA repair. The chain is RNA polymerase-associated protein RapA from Shewanella sediminis (strain HAW-EB3).